Here is a 574-residue protein sequence, read N- to C-terminus: High-affinity methionine permease (574 aa).

Topologically, residues 1–61 are cytoplasmic; it reads MSEGRTFLSQ…TELDQGEKQL (61 aa). K28 participates in a covalent cross-link: Glycyl lysine isopeptide (Lys-Gly) (interchain with G-Cter in ubiquitin). The chain crosses the membrane as a helical span at residues 62-82; that stretch reads GILSCIGLICNRMLGTGVFAV. At 83-92 the chain is on the extracellular side; it reads SSTIYTLCGS. Residues 93 to 113 form a helical membrane-spanning segment; sequence VGLALIMWAVGAIIAISGLYV. At 114-140 the chain is on the cytoplasmic side; that stretch reads YMEFGTAIPKNGGEKNYLEAIFRKPKF. The helical transmembrane segment at 141–161 threads the bilayer; it reads FITCMYAAYIFFLGWAAGNSI. At 162 to 182 the chain is on the extracellular side; sequence NTAIMFLTAADTEVTKWNQRG. The helical transmembrane segment at 183–203 threads the bilayer; it reads IGVAVVFFAFLINSLNVKIGL. Over 204-207 the chain is Cytoplasmic; the sequence is YLQN. The chain crosses the membrane as a helical span at residues 208–228; it reads ILGIFKIGIVLFISITGWVAL. Topologically, residues 229 to 293 are extracellular; the sequence is GGGLKDGYQS…VRTLKIAGPT (65 aa). A helical membrane pass occupies residues 294 to 314; sequence SMVFLAIIYIFVNIAYFAVVP. Topologically, residues 315–340 are cytoplasmic; it reads KDKLISSKLILAADFFDIVFGGQAKR. A helical membrane pass occupies residues 341-361; that stretch reads AAAALVGLSALGNVLSVIFSQ. The Extracellular portion of the chain corresponds to 362-418; it reads GRIIQQLGREGVLPFSNFFASSKPFNSPMVGLFQHFIVCTVTILAPPPGDAYLLVQN. Residues 419–439 form a helical membrane-spanning segment; the sequence is LISYPMNIINFAISAGLLWIY. Over 440-455 the chain is Cytoplasmic; it reads WQRRQGKIEWNPPIKA. Residues 456-476 traverse the membrane as a helical segment; sequence GVFVTGFFTLSNLYLIIAPYV. Residues 477–490 are Extracellular-facing; the sequence is PPSNGESVYSSMPY. A helical membrane pass occupies residues 491 to 511; that stretch reads WIHCVIAWGIFFFGGVYYVVW. Residues 512–574 lie on the Cytoplasmic side of the membrane; it reads AQLLPRWGHY…HYKSEQEKSL (63 aa). Position 552 is a phosphothreonine (T552). S573 carries the post-translational modification Phosphoserine.

The protein to yeast low affinity methionine permease (MUP3).

The protein localises to the membrane. High affinity permease for methionine. The protein is High-affinity methionine permease (MUP1) of Saccharomyces cerevisiae (strain ATCC 204508 / S288c) (Baker's yeast).